Consider the following 680-residue polypeptide: Dihydroxyacetone phosphate acyltransferase (680 aa).

Phosphoserine is present on residues Ser12 and Ser17. The HXXXXD motif signature appears at 162–167 (HRSYID). Lys643 carries the N6-acetyllysine modification. The Microbody targeting signal signature appears at 678-680 (AKL).

The protein belongs to the GPAT/DAPAT family. Part of a heterotrimeric complex composed of GNPAT, AGPS and a modified form of GNPAT.

Its subcellular location is the peroxisome membrane. It catalyses the reaction dihydroxyacetone phosphate + an acyl-CoA = a 1-acylglycerone 3-phosphate + CoA. It carries out the reaction dihydroxyacetone phosphate + hexadecanoyl-CoA = 1-hexadecanoylglycerone 3-phosphate + CoA. The protein operates within membrane lipid metabolism; glycerophospholipid metabolism. Functionally, dihydroxyacetonephosphate acyltransferase catalyzing the first step in the biosynthesis of plasmalogens, a subset of phospholipids that differ from other glycerolipids by having an alkyl chain attached through a vinyl ether linkage at the sn-1 position of the glycerol backbone, and which unique physical properties have an impact on various aspects of cell signaling and membrane biology. The polypeptide is Dihydroxyacetone phosphate acyltransferase (Bos taurus (Bovine)).